Consider the following 146-residue polypeptide: Large ribosomal subunit protein uL15 (146 aa).

Positions 1–13 are enriched in basic and acidic residues; sequence MKLHELHSAEGSR. The tract at residues 1-55 is disordered; the sequence is MKLHELHSAEGSRRNRKRVGRGTSSGYGKTSGRGQKGQLARQGGHTRLGFEGGQM. The span at 23 to 35 shows a compositional bias: gly residues; that stretch reads TSSGYGKTSGRGQ.

It belongs to the universal ribosomal protein uL15 family. In terms of assembly, part of the 50S ribosomal subunit.

In terms of biological role, binds to the 23S rRNA. In Lactobacillus acidophilus (strain ATCC 700396 / NCK56 / N2 / NCFM), this protein is Large ribosomal subunit protein uL15.